Here is a 382-residue protein sequence, read N- to C-terminus: O-antigen polymerase (382 aa).

Topologically, residues 1-3 (MNN) are cytoplasmic. Residues 4 to 22 (INKIFITFLCIELIIGGGG) traverse the membrane as a helical segment. The Periplasmic portion of the chain corresponds to 23 to 34 (RLLEPLGIFPLR). Residues 35-54 (YLLFVFSFILLIFNLVTFNF) traverse the membrane as a helical segment. Residues 55–62 (SITQKCVS) are Cytoplasmic-facing. The helical transmembrane segment at 63 to 81 (LFIWLLLFPFYGFFVGLLA) threads the bilayer. Over 82–94 (GNKINDILFDVQP) the chain is Periplasmic. The chain crosses the membrane as a helical span at residues 95–112 (YLFMLSLIYLFTLRYTLK). Topologically, residues 113 to 125 (VFSCEIFIKIVNA) are cytoplasmic. A helical membrane pass occupies residues 126 to 146 (FALYGSLLYISYIILLNFGLL). The Periplasmic segment spans residues 147–167 (NFNLIYEHLSLTSEFFFRPDG). The helical transmembrane segment at 168 to 187 (AFFSKSFYFFGVGAIISFVD) threads the bilayer. The Cytoplasmic segment spans residues 188–189 (KK). Residues 190–206 (YLKCLIIVLAILLTESR) traverse the membrane as a helical segment. Residues 207-208 (GV) are Periplasmic-facing. The helical transmembrane segment at 209-226 (LLFTTLSLLLASFKLHKL) threads the bilayer. The Cytoplasmic segment spans residues 227–229 (YLN). The helical transmembrane segment at 230 to 247 (TIIIILGSVLFIIMLYMV) threads the bilayer. Over 248-300 (GSRSEDSDSVRFNDLYFYYKNVDLATFLFGRGFGSFILDRLRIEIVPLEILQK) the chain is Periplasmic. Residues 301 to 318 (TGVIGVFISLVPMLLIFL) form a helical membrane-spanning segment. Over 319–329 (KGYFLNSTKTS) the chain is Cytoplasmic. The helical transmembrane segment at 330–349 (LMMSLILFFSITVSITNPFL) threads the bilayer. Residues 350–352 (FTP) are Periplasmic-facing. The chain crosses the membrane as a helical span at residues 353–370 (MGIFIIGVVVLWVFSIEN). Residues 371-382 (IQISNNLTSGAK) are Cytoplasmic-facing.

The protein localises to the cell inner membrane. The enzyme catalyses n lipid-linked O-antigen repeat units = a lipid-linked O antigen + (n-1) polyisoprenyl diphosphate.. It functions in the pathway bacterial outer membrane biogenesis; LPS O-antigen biosynthesis. Its function is as follows. Polymerase involved in the biosynthesis of the lipopolysaccharide (LPS). Catalyzes the polymerization of the O-antigen repeat units on the periplasmic face of the inner membrane, leading to the formation of the lipid-linked O-antigen molecule. This chain is O-antigen polymerase, found in Shigella flexneri.